A 510-amino-acid chain; its full sequence is Maturase K (510 aa).

Belongs to the intron maturase 2 family. MatK subfamily.

It is found in the plastid. The protein resides in the chloroplast. Usually encoded in the trnK tRNA gene intron. Probably assists in splicing its own and other chloroplast group II introns. In Populus nigra (Lombardy poplar), this protein is Maturase K.